Here is a 32-residue protein sequence, read N- to C-terminus: Photosystem I reaction center subunit XII (32 aa).

A helical transmembrane segment spans residues 4–26 (ISDSQIIVILLSVFITSILALRL).

It belongs to the PsaM family.

The protein resides in the plastid. Its subcellular location is the chloroplast thylakoid membrane. This is Photosystem I reaction center subunit XII from Marchantia polymorpha (Common liverwort).